A 198-amino-acid polypeptide reads, in one-letter code: Eukaryotic translation initiation factor isoform 4E (198 aa).

The tract at residues 1-25 is disordered; the sequence is MATDDVNEPLPAAAELPATEAEKQP. N-acetylalanine is present on alanine 2. Positions 8 to 19 are enriched in low complexity; it reads EPLPAAAELPAT. Residues 46–47 and 92–93 contribute to the mRNA site; these read WG and WE. Residues cysteine 97 and cysteine 138 are joined by a disulfide bond. 145-152 lines the mRNA pocket; sequence RPQSKQDK.

This sequence belongs to the eukaryotic initiation factor 4E family. As to quaternary structure, EIF4F is a multi-subunit complex, the composition of which varies with external and internal environmental conditions. It is composed of at least EIF4A, EIF4E and EIF4G. EIF4E is also known to interact with other partners. In higher plants two isoforms of EIF4F have been identified, named isoform EIF4F and isoform EIF(iso)4F. Isoform EIF4F has subunits p220 and p26, whereas isoform EIF(iso)4F has subunits p82 and p28. This isoform interacts with the viral protein genome linked (VPg)-proteinase of turnip mosaic potyvirus. Interacts directly with LOX2. Interacts with BTF3. According to the redox status, the Cys-97-Cys-138 disulfide bridge may have a role in regulating protein function by affecting its ability to bind capped mRNA. As to expression, abundant in floral organs and in young developing tissues.

Functionally, recognizes and binds the 7-methylguanosine-containing mRNA cap during an early step in the initiation of protein synthesis and facilitates ribosome binding by inducing the unwinding of the mRNAs secondary structures. Mediates susceptibility to Turnipmosaic potyvirus (TuMV) and Tobacco etch potyvirus (TEV). This Arabidopsis thaliana (Mouse-ear cress) protein is Eukaryotic translation initiation factor isoform 4E (EIF(ISO)4E).